The primary structure comprises 295 residues: SPX domain-containing protein 1 (295 aa).

One can recognise an SPX domain in the interval 1-166 (MKFGKSLSSQ…GALIRLPFIQ (166 aa)). The disordered stretch occupies residues 197-227 (NELPVSSEDGRGDSTNEDKPSNPSSSLVNGG). Basic and acidic residues predominate over residues 204-216 (EDGRGDSTNEDKP).

In terms of assembly, interacts (via SPX domain) with PHR2 (via C-terminus). Interacts with RLI1 in the nucleus to prevents its positive regulation of leaf inclination during phosphate (Pi) starvation.

It is found in the nucleus. In terms of biological role, involved in plant adaptation to phosphate (Pi) starvation. Inhibits PHR2 DNA-binding activity via a Pi-dependent protein interaction. Suppresses the regulation on expression of PT2 by PHR2 and accumulation of shoot Pi. Optimizes growth under phosphate-limited conditions through a negative feedback loop of the PSI (phosphate starvation-induced) signaling pathway. Regulates the expression of SPX2, SPX3 and SPX5. May be an important link between signal transduction pathways related to phosphate starvation and cold stress. Together with SPX2, plays a negative role in the regulation of leaf inclination by preventing RLI1 transcription factor activity in Pi depleted conditions. The sequence is that of SPX domain-containing protein 1 from Oryza sativa subsp. indica (Rice).